Here is a 550-residue protein sequence, read N- to C-terminus: Leucine-rich repeat, immunoglobulin-like domain and transmembrane domain-containing protein 2 (550 aa).

The N-terminal stretch at 1-19 (MASVFHYFLLVLVFLDTHA) is a signal peptide. The LRRNT domain maps to 23–54 (FCLPGCTCSEESFGRTLQCTSVSLGKIPGNLS). A glycan (N-linked (GlcNAc...) asparagine) is linked at Asn52. LRR repeat units follow at residues 80-103 (TLEY…EHLP), 104-125 (ELRE…AFRA), 128-149 (LLRV…ALQF), and 152-173 (SLTY…VFLN). Positions 200–252 (NPWVCDCRLRGLVQFVKSITLPVILVNSYLICQGPLSKAGQLFHETELSACMK) constitute an LRRCT domain. The 89-residue stretch at 253–341 (PQISTPSANI…SIGKSNLVIS (89 aa)) folds into the Ig-like domain. Cys274 and Cys327 are oxidised to a cystine. Residues 361-451 (EGNAYIDLRV…QGQCVAFVTG (91 aa)) form the Fibronectin type-III domain. A helical membrane pass occupies residues 466–486 (VTVVLCVVLLAVPVGAYAWAA). A disordered region spans residues 508–550 (SCTPAAPQSKDGSFREHPAVCDDGEGHIDTEGDKEKGGTEDNS). Residues 519 to 550 (GSFREHPAVCDDGEGHIDTEGDKEKGGTEDNS) are compositionally biased toward basic and acidic residues.

Interacts with LRIT1; may form a heterodimer with LRIT1.

It is found in the membrane. This Homo sapiens (Human) protein is Leucine-rich repeat, immunoglobulin-like domain and transmembrane domain-containing protein 2 (LRIT2).